A 578-amino-acid chain; its full sequence is MICOS complex subunit MIC60 (578 aa).

A mitochondrion-targeting transit peptide spans 1–28; it reads MIRTSVRRVVVNSNKFDVRSISNSSIRF. Topologically, residues 29–68 are mitochondrial matrix; the sequence is NVPNNQRTPPPAVRPPTSPIIVTEGGPKGGSQKQKKKFSF. Residues 69 to 91 traverse the membrane as a helical segment; the sequence is AGFLFKTAFWASVVYGGTLFVAT. Topologically, residues 92-578 are mitochondrial intermembrane; that stretch reads KNDKVMDFIM…KIIDAESKIL (487 aa). The disordered stretch occupies residues 169 to 191; the sequence is LGTSTGAKPRQAIPEGNSAPTPA. Residues 248 to 317 are a coiled coil; sequence ESLMREITEN…HEKAQMEKKL (70 aa).

This sequence belongs to the MICOS complex subunit Mic60 family. As to quaternary structure, component of the mitochondrial contact site and cristae organizing system (MICOS) complex.

The protein localises to the mitochondrion inner membrane. Functionally, component of the MICOS complex, a large protein complex of the mitochondrial inner membrane that plays crucial roles in the maintenance of crista junctions, inner membrane architecture, and formation of contact sites to the outer membrane. Plays a role in keeping cristae membranes connected to the inner boundary membrane. Also promotes protein import via the mitochondrial intermembrane space assembly (MIA) pathway. This is MICOS complex subunit MIC60 (MIC60) from Debaryomyces hansenii (strain ATCC 36239 / CBS 767 / BCRC 21394 / JCM 1990 / NBRC 0083 / IGC 2968) (Yeast).